Consider the following 351-residue polypeptide: MAAAPLKVCIVGSGNWGSAVAKIIGSNVKTLQKFSSTVKMWVFEETVNGRKLTDIINNDHENVKYLPGHKLPENVVAVPNLSEAVQDADLLVFVIPHQFIHKICDEITGRVPEKALGITLIKGIDEGPDGLKLISDIIREKMGIDISVLMGANIASEVAAEKFCETTIGSKVMQNGLLFKELLQTPNFRITVVDDADTVELCGALKNIVAVGAGFCDGLRCGDNTKAAVIRLGLMEMIAFAKIFCKGQVSTATFLESCGVADLITTCYGGRNRRVAEAFARTGKTIEELEKELLNGQKLQGPQTSAEVYRILRQKGLLDKFPLFTAVYQICYEGRPVTQMLSCLQSHPEHI.

Residue 12-17 (GSGNWG) participates in NAD(+) binding. Lys-122 is a substrate binding site. An NAD(+)-binding site is contributed by Ala-155. Lys-206 serves as the catalytic Proton acceptor. The NAD(+) site is built by Arg-271, Lys-298, and Gln-300. A substrate-binding site is contributed by 271 to 272 (RN).

The protein belongs to the NAD-dependent glycerol-3-phosphate dehydrogenase family. As to quaternary structure, interacts with SCN5A.

It localises to the cytoplasm. It catalyses the reaction sn-glycerol 3-phosphate + NAD(+) = dihydroxyacetone phosphate + NADH + H(+). In terms of biological role, plays a role in regulating cardiac sodium current; decreased enzymatic activity with resulting increased levels of glycerol 3-phosphate activating the DPD1L-dependent SCN5A phosphorylation pathway, may ultimately lead to decreased sodium current; cardiac sodium current may also be reduced due to alterations of NAD(H) balance induced by DPD1L. The chain is Glycerol-3-phosphate dehydrogenase 1-like protein (Gpd1l) from Mus musculus (Mouse).